The primary structure comprises 248 residues: Mannose-binding protein C (248 aa).

Positions 1 to 20 (MSLFPSLPLLLLSMVAASYS) are cleaved as a signal peptide. The region spanning 42–99 (GINGFPGKDGRDGTKGEKGEPGQGLRGLQGPPGKLGPPGNPGPSGSPGAKGQKGDPGA) is the Collagen-like domain. Residues 43–112 (INGFPGKDGR…CDSSLANPER (70 aa)) are disordered. 4-hydroxyproline is present on P47. Residues 49–61 (KDGRDGTKGEKGE) are compositionally biased toward basic and acidic residues. P73, P79, P82, and P88 each carry 4-hydroxyproline. Residues 112 to 130 (RKTLQTEINRIKKWVTFSL) adopt a coiled-coil conformation. Residues 134 to 245 (VGKKLFLTNG…CSSSHLVICE (112 aa)) enclose the C-type lectin domain. Intrachain disulfides connect C155–C244 and C222–C236.

Oligomeric complex of 3 or more homotrimers. Interacts with MASP1 and MASP2. Interacts with MEP1A and MEP1B and may inhibit their catalytic activity. Hydroxylation on proline residues within the sequence motif, GXPG, is most likely to be 4-hydroxy as this fits the requirement for 4-hydroxylation in vertebrates.

The protein localises to the secreted. In terms of biological role, calcium-dependent lectin involved in innate immune defense. Binds mannose, fucose and N-acetylglucosamine on different microorganisms and activates the lectin complement pathway. Binds to late apoptotic cells, as well as to apoptotic blebs and to necrotic cells, but not to early apoptotic cells, facilitating their uptake by macrophages. The sequence is that of Mannose-binding protein C (MBL2) from Callithrix jacchus (White-tufted-ear marmoset).